A 301-amino-acid chain; its full sequence is MKLFALLVSITLCYSFPAPLQTNVSEPFGLLQKVSEQVIDPDYNIPEVKDAPAIPYDERNSPTHAYSVDISFHTTPSDMDCLRDQGYKSVFVRALNPIGNTYFDRNALNTINNAFEAGLGSEVYITPNINSTRSGADQISLVYQNLLANGINVRSIWIQVTSPTNWVAPMAVRIEFIQDMIRSAKNLGLSVGIYTSFYDWLEITGGWNTFSSDVFLWYWHVLSMGTDGETTPTLEDFRPFGPWRQATVKQFGQVEKLCGMIVNRNVYSTGNQHLSQIVHFSTHQENSSSEKKLIRVGGIGF.

The N-terminal stretch at 1-15 (MKLFALLVSITLCYS) is a signal peptide. A Ch-type lysozyme domain is found at 64 to 282 (HAYSVDISFH…HLSQIVHFST (219 aa)).

This sequence belongs to the glycosyl hydrolase 25 family.

Plays a role in the stress response to heavy metals such as copper, probably in a kgb-1-dependent manner. The protein is Lysozyme-like protein 3 of Caenorhabditis elegans.